Consider the following 456-residue polypeptide: Chordin-like protein 1 (456 aa).

The signal sequence occupies residues 1–27 (MRKKWKMGGMKYIFSLLFFLLLEGGKT). VWFC domains follow at residues 35–100 (TYCM…PRCP) and 113–179 (KSCE…RVCR). The N-linked (GlcNAc...) asparagine glycan is linked to N118. Positions 179–181 (RGD) match the Cell attachment site motif. The disordered stretch occupies residues 202-223 (ARHSYHRSHYDPPPSRQAGGLS). Residues 258–323 (QVCVSNGKTY…IDGKCCKVCP (66 aa)) form the VWFC 3 domain. N-linked (GlcNAc...) asparagine glycosylation occurs at N291.

Expressed in the developing cornea and in the eye anterior segment in addition to the retina. Differentially expressed in the fetal brain. There is high expression in cerebellum and neocortex. Expressed in retinal pericytes.

It localises to the secreted. Its function is as follows. Antagonizes the function of BMP4 by binding to it and preventing its interaction with receptors. Alters the fate commitment of neural stem cells from gliogenesis to neurogenesis. Contributes to neuronal differentiation of neural stem cells in the brain by preventing the adoption of a glial fate. May play a crucial role in dorsoventral axis formation. May play a role in embryonic bone formation. May also play an important role in regulating retinal angiogenesis through modulation of BMP4 actions in endothelial cells. Plays a role during anterior segment eye development. This Homo sapiens (Human) protein is Chordin-like protein 1 (CHRDL1).